The sequence spans 397 residues: MAPISLSWLLRLATFCHLTVLLAGQHHGVTKCNITCSKMTSKIPVALLIHYQQNQASCGKRAIILETRQHRLFCADPKEQWVKDAMQHLDRQAAALTRNGGTFEKQIGEVKPRTTPAAGGMDESVVLEPEATGESSSLEPTPSSQEAQRALGTSPELPTGVTGSSGTRLPPTPKAQDGGPVGTELFRVPPVSTAATWQSSAPHQPGPSLWAEAKTSEAPSTQDPSTQASTASSPAPEENAPSEGQRVWGQGQSPRPENSLEREEMGPVPAHTDAFQDWGPGSMAHVSVVPVSSEGTPSREPVASGSWTPKAEEPIHATMDPQRLGVLITPVPDAQAATRRQAVGLLAFLGLLFCLGVAMFTYQSLQGCPRKMAGEMAEGLRYIPRSCGSNSYVLVPV.

A signal peptide spans 1–24 (MAPISLSWLLRLATFCHLTVLLAG). The segment at 25 to 100 (QHHGVTKCNI…RQAAALTRNG (76 aa)) is chemokine and involved in interaction with ITGAV:ITGB3 and ITGA4:ITGB1. The Extracellular segment spans residues 25 to 341 (QHHGVTKCNI…PDAQAATRRQ (317 aa)). 2 cysteine pairs are disulfide-bonded: C32-C58 and C36-C74. N-linked (GlcNAc...) asparagine glycosylation is present at N33. Positions 101-341 (GTFEKQIGEV…PDAQAATRRQ (241 aa)) are mucin-like stalk. Disordered regions lie at residues 128 to 265 (EPEA…REEM) and 289 to 309 (VPVS…SWTP). Polar residues predominate over residues 133-147 (GESSSLEPTPSSQEA). O-linked (GalNAc...) threonine glycosylation occurs at T183. The span at 193–202 (TAATWQSSAP) shows a compositional bias: polar residues. Residues 219 to 243 (PSTQDPSTQASTASSPAPEENAPSE) show a composition bias toward low complexity. Residue S253 is glycosylated (O-linked (GalNAc...) serine). T329 is a glycosylation site (O-linked (GalNAc...) threonine). The chain crosses the membrane as a helical span at residues 342 to 362 (AVGLLAFLGLLFCLGVAMFTY). Residues 363 to 397 (QSLQGCPRKMAGEMAEGLRYIPRSCGSNSYVLVPV) are Cytoplasmic-facing.

It belongs to the intercrine delta family. In terms of assembly, monomer. Forms a ternary complex with CX3CR1 and ITGAV:ITGB3 or ITGA4:ITGB1. As to quaternary structure, (Microbial infection) Interacts with pox virus crmD; this inhibits cell migration mediated by CX3CL1. (Microbial infection) Interacts (via N-terminus) with human cytomegalovirus (HHV-5) US28. In terms of assembly, (Microbial infection) Interacts with P.falciparum (strain 3D7) CBP1 and CBP2 (via their extracellular domains); the interaction mediates the adhesion of infected erythrocytes with endothelial cells. In terms of processing, a soluble short 95 kDa form may be released by proteolytic cleavage from the long membrane-anchored form. Post-translationally, O-glycosylated with core 1 or possibly core 8 glycans. As to expression, expressed in the seminal plasma, endometrial fluid and follicular fluid (at protein level). Small intestine, colon, testis, prostate, heart, brain, lung, skeletal muscle, kidney and pancreas. Most abundant in the brain and heart.

The protein localises to the cell membrane. It is found in the secreted. Functionally, chemokine that acts as a ligand for both CX3CR1 and integrins ITGAV:ITGB3 and ITGA4:ITGB1. The CX3CR1-CX3CL1 signaling exerts distinct functions in different tissue compartments, such as immune response, inflammation, cell adhesion and chemotaxis. Regulates leukocyte adhesion and migration processes at the endothelium. Can activate integrins in both a CX3CR1-dependent and CX3CR1-independent manner. In the presence of CX3CR1, activates integrins by binding to the classical ligand-binding site (site 1) in integrins. In the absence of CX3CR1, binds to a second site (site 2) in integrins which is distinct from site 1 and enhances the binding of other integrin ligands to site 1. Its function is as follows. The soluble form is chemotactic for T-cells and monocytes, but not for neutrophils. In terms of biological role, the membrane-bound form promotes adhesion of those leukocytes to endothelial cells. (Microbial infection) Mediates the cytoadherence of erythrocytes infected with parasite P.falciparum (strain 3D7) with endothelial cells by interacting with P.falciparum CBP1 and CBP2 expressed at the surface of erythrocytes. The adhesion prevents the elimination of infected erythrocytes by the spleen. In Homo sapiens (Human), this protein is Fractalkine.